The chain runs to 190 residues: Dense granule protein 1 (190 aa).

The N-terminal stretch at 1–24 is a signal peptide; sequence MVRVSAIVGAAASVFVCLSAGAYA. N-linked (GlcNAc...) asparagine glycosylation occurs at asparagine 30.

Its subcellular location is the secreted. The polypeptide is Dense granule protein 1 (GRA1) (Toxoplasma gondii).